The following is a 548-amino-acid chain: Chaperonin GroEL (548 aa).

ATP is bound by residues 30–33, Lys-51, 87–91, Gly-415, and Asp-494; these read TLGP and DGTTT.

Belongs to the chaperonin (HSP60) family. In terms of assembly, forms a cylinder of 14 subunits composed of two heptameric rings stacked back-to-back. Interacts with the co-chaperonin GroES.

The protein localises to the cytoplasm. The catalysed reaction is ATP + H2O + a folded polypeptide = ADP + phosphate + an unfolded polypeptide.. In terms of biological role, together with its co-chaperonin GroES, plays an essential role in assisting protein folding. The GroEL-GroES system forms a nano-cage that allows encapsulation of the non-native substrate proteins and provides a physical environment optimized to promote and accelerate protein folding. This chain is Chaperonin GroEL, found in Oleispira antarctica.